A 508-amino-acid chain; its full sequence is Photosystem II CP47 reaction center protein (508 aa).

The next 6 membrane-spanning stretches (helical) occupy residues 21-36 (SVHIMHTALVAGWAGS), 101-115 (IVFSGLCFLAAIWHW), 140-156 (GIHLFLSGVACFGFGAF), 203-218 (IAAGTLGILAGLFHLS), 237-252 (VLSSSIAAVFFAAFVV), and 457-472 (SFALLFFFGHIWHGAR).

It belongs to the PsbB/PsbC family. PsbB subfamily. PSII is composed of 1 copy each of membrane proteins PsbA, PsbB, PsbC, PsbD, PsbE, PsbF, PsbH, PsbI, PsbJ, PsbK, PsbL, PsbM, PsbT, PsbX, PsbY, PsbZ, Psb30/Ycf12, at least 3 peripheral proteins of the oxygen-evolving complex and a large number of cofactors. It forms dimeric complexes. Requires Binds multiple chlorophylls. PSII binds additional chlorophylls, carotenoids and specific lipids. as cofactor.

It localises to the plastid. The protein resides in the chloroplast thylakoid membrane. Functionally, one of the components of the core complex of photosystem II (PSII). It binds chlorophyll and helps catalyze the primary light-induced photochemical processes of PSII. PSII is a light-driven water:plastoquinone oxidoreductase, using light energy to abstract electrons from H(2)O, generating O(2) and a proton gradient subsequently used for ATP formation. This is Photosystem II CP47 reaction center protein from Eucalyptus globulus subsp. globulus (Tasmanian blue gum).